Reading from the N-terminus, the 82-residue chain is MNNSKDNPFRGAIARKARIYLREGLDCVYFLNKAGQAEPCPACTSLVFQGKTCEEHIHNNNLLSWQVVRQLERQTPQRQSSN.

Involved in host translation shutoff without degradating host RNA. By suppressing host gene expression, facilitates the evasion from host type I interferon immune response. The sequence is that of Host translation inhibitor 5b from Avian infectious bronchitis virus (strain KB8523) (IBV).